The following is a 754-amino-acid chain: 5-methyltetrahydropteroyltriglutamate--homocysteine methyltransferase (754 aa).

5-methyltetrahydropteroyltri-L-glutamate-binding positions include 17–20 (RELK) and Lys-117. Residues 431–433 (IGS) and Glu-484 each bind L-homocysteine. L-methionine-binding positions include 431–433 (IGS) and Glu-484. 5-methyltetrahydropteroyltri-L-glutamate is bound by residues 515–516 (RC) and Trp-561. Asp-599 contributes to the L-homocysteine binding site. An L-methionine-binding site is contributed by Asp-599. 5-methyltetrahydropteroyltri-L-glutamate is bound at residue Glu-605. Zn(2+) is bound by residues His-641, Cys-643, and Glu-665. His-694 serves as the catalytic Proton donor. Cys-726 contributes to the Zn(2+) binding site.

This sequence belongs to the vitamin-B12 independent methionine synthase family. Zn(2+) is required as a cofactor.

The catalysed reaction is 5-methyltetrahydropteroyltri-L-glutamate + L-homocysteine = tetrahydropteroyltri-L-glutamate + L-methionine. Its pathway is amino-acid biosynthesis; L-methionine biosynthesis via de novo pathway; L-methionine from L-homocysteine (MetE route): step 1/1. Functionally, catalyzes the transfer of a methyl group from 5-methyltetrahydrofolate to homocysteine resulting in methionine formation. In Salmonella dublin (strain CT_02021853), this protein is 5-methyltetrahydropteroyltriglutamate--homocysteine methyltransferase.